Reading from the N-terminus, the 181-residue chain is TETTSFSITKFGPDQQNLIFQGDGYTTKERLTLTKAVRNTVGRALYSSPIHIWDSKTGNVANFVTSFTFVIDAPNSYNVADGFTFFIAPVDTKPQTGGGYLGVFNSKDYDKTSQTVAVEFDTFYNTAWDPSNGDRHIGIDVNSIKSINTKSWKLQNGKEANVVIAFNAATNVLTVSLTYPN.

The Mn(2+) site is built by Glu119 and Asp121. Ca(2+) is bound by residues Asp121, Phe123, Asn125, and Asp129. Mn(2+)-binding residues include Asp129 and His136.

Belongs to the leguminous lectin family. As to quaternary structure, tetramer of two alpha and two beta chains.

This is Lectin beta-1 and beta-2 chains from Lathyrus ochrus (Cyprus-vetch).